The primary structure comprises 271 residues: Phosphate import ATP-binding protein PstB 3 (271 aa).

Positions 20 to 266 constitute an ABC transporter domain; it reads LRVEGLGFYY…PQETQTRDYV (247 aa). 52–59 provides a ligand contact to ATP; it reads GPSGCGKS.

The protein belongs to the ABC transporter superfamily. Phosphate importer (TC 3.A.1.7) family. As to quaternary structure, the complex is composed of two ATP-binding proteins (PstB), two transmembrane proteins (PstC and PstA) and a solute-binding protein (PstS).

It localises to the cell inner membrane. It carries out the reaction phosphate(out) + ATP + H2O = ADP + 2 phosphate(in) + H(+). Part of the ABC transporter complex PstSACB involved in phosphate import. Responsible for energy coupling to the transport system. The protein is Phosphate import ATP-binding protein PstB 3 of Synechocystis sp. (strain ATCC 27184 / PCC 6803 / Kazusa).